The following is a 232-amino-acid chain: Ribose-5-phosphate isomerase A (232 aa).

Substrate contacts are provided by residues 28–31 (TGST), 83–86 (DGAD), and 96–99 (KGGG). The active-site Proton acceptor is the Glu-105. Lys-123 contributes to the substrate binding site.

It belongs to the ribose 5-phosphate isomerase family. Homodimer.

The catalysed reaction is aldehydo-D-ribose 5-phosphate = D-ribulose 5-phosphate. It functions in the pathway carbohydrate degradation; pentose phosphate pathway; D-ribose 5-phosphate from D-ribulose 5-phosphate (non-oxidative stage): step 1/1. Catalyzes the reversible conversion of ribose-5-phosphate to ribulose 5-phosphate. The chain is Ribose-5-phosphate isomerase A from Allorhizobium ampelinum (strain ATCC BAA-846 / DSM 112012 / S4) (Agrobacterium vitis (strain S4)).